Consider the following 663-residue polypeptide: Transketolase 2 (663 aa).

His25 contacts substrate. Thiamine diphosphate is bound by residues His65 and 113-115 (GPL). A Mg(2+)-binding site is contributed by Asp154. Thiamine diphosphate-binding residues include Gly155 and Asn184. 2 residues coordinate Mg(2+): Asn184 and Ile186. Substrate is bound by residues His259, Arg356, and Ser383. His259 is a thiamine diphosphate binding site. Glu410 (proton donor) is an active-site residue. A thiamine diphosphate-binding site is contributed by Phe436. The substrate site is built by His460, Asp468, and Arg519.

It belongs to the transketolase family. In terms of assembly, homodimer. Mg(2+) is required as a cofactor. The cofactor is Ca(2+). It depends on Mn(2+) as a cofactor. Requires Co(2+) as cofactor. Thiamine diphosphate serves as cofactor.

It catalyses the reaction D-sedoheptulose 7-phosphate + D-glyceraldehyde 3-phosphate = aldehydo-D-ribose 5-phosphate + D-xylulose 5-phosphate. Catalyzes the transfer of a two-carbon ketol group from a ketose donor to an aldose acceptor, via a covalent intermediate with the cofactor thiamine pyrophosphate. This Vibrio vulnificus (strain CMCP6) protein is Transketolase 2 (tkt2).